Here is a 512-residue protein sequence, read N- to C-terminus: Protein OS-9 homolog (512 aa).

Residues methionine 1–alanine 17 form the signal peptide. The tract at residues glutamine 71–serine 91 is disordered. The segment covering arginine 73 to aspartate 88 has biased composition (basic and acidic residues). A glycan (N-linked (GlcNAc...) asparagine) is linked at asparagine 118. Residues aspartate 149–aspartate 288 form the MRH domain. A disulfide bridge connects residues cysteine 151 and cysteine 164. 7 residues coordinate a mannooligosaccharide derivative: tryptophan 158, tryptophan 159, glutamine 171, aspartate 242, arginine 248, glutamate 270, and tyrosine 276. 2 disulfide bridges follow: cysteine 241-cysteine 274 and cysteine 256-cysteine 286. Disordered regions lie at residues glutamine 329–valine 349 and alanine 485–leucine 512. The segment covering aspartate 492–glutamine 504 has biased composition (acidic residues). A Prevents secretion from ER motif is present at residues lysine 509–leucine 512.

This sequence belongs to the OS-9 family. As to quaternary structure, interacts with missfolded ER lumenal proteins.

The protein resides in the endoplasmic reticulum membrane. In terms of biological role, lectin involved in the quality control of the secretory pathway. As a member of the endoplasmic reticulum-associated degradation lumenal (ERAD-L) surveillance system, targets misfolded endoplasmic reticulum lumenal glycoproteins for degradation. The sequence is that of Protein OS-9 homolog (YOS1) from Gibberella zeae (strain ATCC MYA-4620 / CBS 123657 / FGSC 9075 / NRRL 31084 / PH-1) (Wheat head blight fungus).